Reading from the N-terminus, the 146-residue chain is 3-dehydroquinate dehydratase (146 aa).

Tyr22 acts as the Proton acceptor in catalysis. Substrate contacts are provided by Asn74, His80, and Asp87. The active-site Proton donor is the His100. Residues 101-102 (LS) and Arg111 each bind substrate.

This sequence belongs to the type-II 3-dehydroquinase family. In terms of assembly, homododecamer.

The enzyme catalyses 3-dehydroquinate = 3-dehydroshikimate + H2O. It functions in the pathway metabolic intermediate biosynthesis; chorismate biosynthesis; chorismate from D-erythrose 4-phosphate and phosphoenolpyruvate: step 3/7. Its function is as follows. Catalyzes a trans-dehydration via an enolate intermediate. This chain is 3-dehydroquinate dehydratase, found in Clostridium perfringens (strain SM101 / Type A).